The sequence spans 398 residues: Alpha-monoglucosyldiacylglycerol synthase (398 aa).

Belongs to the glycosyltransferase group 1 family. Glycosyltransferase 4 subfamily. Requires Mg(2+) as cofactor.

It is found in the cell membrane. It carries out the reaction a 1,2-diacyl-sn-glycerol + UDP-alpha-D-glucose = a 1,2-diacyl-3-O-(alpha-D-glucopyranosyl)-sn-glycerol + UDP + H(+). With respect to regulation, activated by the negatively charged lipids phosphatidylglycerol (PG), cardiolipin (CL), dodecylphosphate-rac-glycerol (PDG), 1,2-dioleoyl-phosphatidylglycerol (DOPG) and phosphatidylserine (PS). Functionally, glucosyltransferase involved in the biosynthesis of the non-bilayer-prone membrane lipid alpha-monoglucosyldiacylglycerol. This is a major component for maintaining a certain anionic lipid surface charge density, for balancing the bilayer to non-bilayer phase equilibria and for keeping a constant lipid bilayer spontaneous curvature (curvature packing stress). Catalyzes the transfer of a glucosyl residue from UDP-Glc to diacylglycerol (DAG) acceptor to form the corresponding alpha-glucosyl-DAG (1,2-diacyl-3-O-(alpha-D-glucopyranosyl)-sn-glycerol). It can only use UDP-Glc as sugar donor and DAG is the preferred substrate. This chain is Alpha-monoglucosyldiacylglycerol synthase (mgs), found in Acholeplasma laidlawii.